Reading from the N-terminus, the 688-residue chain is Elongation factor G (688 aa).

The tr-type G domain occupies 8–282 (ERTRNIGIMA…AVLDYLPAPT (275 aa)). Residues 17-24 (AHIDAGKT), 81-85 (DTPGH), and 135-138 (NKMD) contribute to the GTP site.

Belongs to the TRAFAC class translation factor GTPase superfamily. Classic translation factor GTPase family. EF-G/EF-2 subfamily.

Its subcellular location is the cytoplasm. Its function is as follows. Catalyzes the GTP-dependent ribosomal translocation step during translation elongation. During this step, the ribosome changes from the pre-translocational (PRE) to the post-translocational (POST) state as the newly formed A-site-bound peptidyl-tRNA and P-site-bound deacylated tRNA move to the P and E sites, respectively. Catalyzes the coordinated movement of the two tRNA molecules, the mRNA and conformational changes in the ribosome. This is Elongation factor G from Clostridioides difficile (strain 630) (Peptoclostridium difficile).